The following is a 375-amino-acid chain: Terpene cyclase braA (375 aa).

Mg(2+) contacts are provided by aspartate 116, asparagine 264, and serine 268. The D(D/E)XX(D/E) motif signature appears at 116 to 120; it reads DDEID. The NSE motif motif lies at 264-272; the sequence is NDVLSLQKE. The short motif at 348 to 355 is the WxxxxxRY motif element; it reads WSYSCERY. The (2E,6E)-farnesyl diphosphate site is built by arginine 354 and tyrosine 355.

The protein belongs to the terpene synthase family. As to quaternary structure, homodimer. It depends on Mg(2+) as a cofactor.

The catalysed reaction is (2E,6E)-farnesyl diphosphate + H2O = trichobrasilenol + diphosphate. It functions in the pathway secondary metabolite biosynthesis. Terpene cyclase; part of the gene cluster that mediates the biosynthesis of the brasilane terpene glycosides brasilane D and E. The biosynthesis starts with the activity of the terpene cyclase braA that converts farnesyl pyrophosphate into the sesquiterpene alcohol trichobrasilenol. Subsequently, trichobrasilenol is glycosylated by the O-glycosyltransferase braB putatively using UDP-GlcNAc as sugar donor to yield brasilane A. The latter then undergoes two rounds of oxidation performed by the cytochrome P450 monooxygenase braC. In the first round braC hydroxylates C-12 forming brasilane D, which serves as substrate in the second round to establish the epoxide at the bond between C-5 and C-10 and oxidize the alcohol at C-12 to an aldehyde leading to the final product brasilane E. The protein is Terpene cyclase braA of Annulohypoxylon truncatum (Hypoxylon truncatum).